Here is a 168-residue protein sequence, read N- to C-terminus: Transcriptional regulator MraZ (168 aa).

2 consecutive SpoVT-AbrB domains span residues 8 to 51 (EYNQ…GGDR) and 90 to 140 (ALNM…KADI).

It belongs to the MraZ family. As to quaternary structure, forms oligomers.

Its subcellular location is the cytoplasm. It localises to the nucleoid. This Cereibacter sphaeroides (strain KD131 / KCTC 12085) (Rhodobacter sphaeroides) protein is Transcriptional regulator MraZ.